Reading from the N-terminus, the 434-residue chain is MEHLDVGPLKTARGTIKLPGSKSISNRVLLLAALAQGETVVRDLLDSDDTRVMLDALGKLGVSVEGQGENAYRVTGTGGRFPNTSADLFMGNAGTAIRPLTAALALQGGEYTLHGVPRMHERPIGDLVDGLRQVGARIDYTGNEGYPPLAIHAAPVKIDAPIRVRGDVSSQFLTALLMALPLVESAGNVTIEVVGELISKPYIEITLNLMARFGVQVARDGWSSFTVPTGVAYTAPGEIFVEGDASSASYFLAAGALGGGPVRVEGVGMSSIQGDVRFADALNRMGANVMAGGNWIEVRGAERDDGKLHAVELDCNHIPDAAMTLAVAALFADGTTTLTNIASWRVKETDRLSAMATELRKLGAEVEEGADYIRVTPPSQWTPPAGGIDTYDDHRMAMAFSLAAFGPVPVRINDPRCVAKTFPEYFTAFGGITA.

3 residues coordinate 3-phosphoshikimate: K22, S23, and R27. Residue K22 coordinates phosphoenolpyruvate. Phosphoenolpyruvate-binding residues include G94 and R122. Residues S169, S170, Q171, S199, D320, and K347 each coordinate 3-phosphoshikimate. Q171 provides a ligand contact to phosphoenolpyruvate. D320 acts as the Proton acceptor in catalysis. Phosphoenolpyruvate is bound by residues R351, R395, and K420.

The protein belongs to the EPSP synthase family. In terms of assembly, monomer.

The protein localises to the cytoplasm. It catalyses the reaction 3-phosphoshikimate + phosphoenolpyruvate = 5-O-(1-carboxyvinyl)-3-phosphoshikimate + phosphate. It participates in metabolic intermediate biosynthesis; chorismate biosynthesis; chorismate from D-erythrose 4-phosphate and phosphoenolpyruvate: step 6/7. In terms of biological role, catalyzes the transfer of the enolpyruvyl moiety of phosphoenolpyruvate (PEP) to the 5-hydroxyl of shikimate-3-phosphate (S3P) to produce enolpyruvyl shikimate-3-phosphate and inorganic phosphate. The sequence is that of 3-phosphoshikimate 1-carboxyvinyltransferase from Ralstonia pickettii (strain 12J).